The chain runs to 348 residues: Eukaryotic translation initiation factor 3 subunit I (348 aa).

WD repeat units lie at residues 8-49, 51-91, 93-135, 147-186, 196-238, and 294-333; these read GHER…GTFE, HMGT…YTYE, PTPV…PKNQ, DGAKKVTIAGWSAGGKYIIAGHEDGLVSKYDGATGEFIDS, EKIH…KVYK, and GHFGPLNTIAVHPDGTGYASGGEDGFIRLHSFDKSYYDFE.

Belongs to the eIF-3 subunit I family. Component of the eukaryotic translation initiation factor 3 (eIF-3) complex.

Its subcellular location is the cytoplasm. Component of the eukaryotic translation initiation factor 3 (eIF-3) complex, which is involved in protein synthesis of a specialized repertoire of mRNAs and, together with other initiation factors, stimulates binding of mRNA and methionyl-tRNAi to the 40S ribosome. The eIF-3 complex specifically targets and initiates translation of a subset of mRNAs involved in cell proliferation. The protein is Eukaryotic translation initiation factor 3 subunit I of Meyerozyma guilliermondii (strain ATCC 6260 / CBS 566 / DSM 6381 / JCM 1539 / NBRC 10279 / NRRL Y-324) (Yeast).